The following is a 49-amino-acid chain: uncharacterized protein (49 aa).

This is an uncharacterized protein from Escherichia coli (Bacteriophage T4).